The sequence spans 213 residues: Adenylate kinase (213 aa).

Residue 10 to 15 (GCGKGT) coordinates ATP. The tract at residues 30–59 (STGDLMRKEISLNTTLGLKCQEYMNAGKYV) is NMP. AMP contacts are provided by residues T31, R36, 57–59 (KYV), 83–86 (GYPR), and Q90. An LID region spans residues 124-161 (NRLVCPLCKASFNLETRKPKQEGLCDFDNTKLVKRSDD). R125 is a binding site for ATP. Zn(2+) contacts are provided by C128 and C131. 134 to 135 (SF) is a binding site for ATP. Zn(2+) is bound by residues C148 and D151. Residues R158 and R169 each coordinate AMP. An ATP-binding site is contributed by N197.

It belongs to the adenylate kinase family. Monomer.

It localises to the cytoplasm. The catalysed reaction is AMP + ATP = 2 ADP. Its pathway is purine metabolism; AMP biosynthesis via salvage pathway; AMP from ADP: step 1/1. Its function is as follows. Catalyzes the reversible transfer of the terminal phosphate group between ATP and AMP. Plays an important role in cellular energy homeostasis and in adenine nucleotide metabolism. The chain is Adenylate kinase from Mycoplasma capricolum subsp. capricolum (strain California kid / ATCC 27343 / NCTC 10154).